Consider the following 419-residue polypeptide: Altered inheritance of mitochondria protein 6 (419 aa).

The N-terminal stretch at 1 to 31 is a signal peptide; that stretch reads MLPPFIVAGLFSSYILIMGLMFSQISHVSNS.

Belongs to the AIM6 family.

This chain is Altered inheritance of mitochondria protein 6 (AIM6), found in Kluyveromyces lactis (strain ATCC 8585 / CBS 2359 / DSM 70799 / NBRC 1267 / NRRL Y-1140 / WM37) (Yeast).